We begin with the raw amino-acid sequence, 405 residues long: Deoxyguanosinetriphosphate triphosphohydrolase-like protein (405 aa).

The 145-residue stretch at 75 to 219 folds into the HD domain; it reads RLTHTIEVAQ…AAIADDIAYN (145 aa).

This sequence belongs to the dGTPase family. Type 2 subfamily.

The protein is Deoxyguanosinetriphosphate triphosphohydrolase-like protein of Rhizobium etli (strain CIAT 652).